Here is a 266-residue protein sequence, read N- to C-terminus: MSEKKKVLMLHGFVQSDKIFSAKTGGLRKNLKKLGYDLYYPCAPHSIDKKALFQSESEKGRDAAKEFNTSATSDEVYGWFFRNPESFNSFQIDQKVFNYLRNYVLENGPFDGVIGFSQGAGLGGYLVTDFNRILNLTDEQQPALKFFISFSGFKLEDQSYQKEYHRIIQVPSLHVRGELDEVVAESRIMALYESWPDNKRTLLVHPGAHFVPNSKPFVSQVCNWIQGITSKEGQEHNAQPEVDRKQFDKPQLEDDLLDMIDSLGKL.

Residues serine 117, aspartate 180, and histidine 209 each act as charge relay system in the active site.

It belongs to the AB hydrolase 3 family.

In terms of biological role, serine hydrolase of unknown specificity. The sequence is that of Family of serine hydrolases 3 (FSH3) from Saccharomyces cerevisiae (strain ATCC 204508 / S288c) (Baker's yeast).